The following is a 379-amino-acid chain: Homoserine O-succinyltransferase (379 aa).

In terms of domain architecture, AB hydrolase-1 spans 51 to 360; that stretch reads NAVLICHALS…DAPQGHDAFL (310 aa). Catalysis depends on Ser-157, which acts as the Nucleophile. Residue Arg-227 participates in substrate binding. Catalysis depends on residues Asp-323 and His-356. Asp-357 lines the substrate pocket.

The protein belongs to the AB hydrolase superfamily. MetX family. Homodimer.

It is found in the cytoplasm. It carries out the reaction L-homoserine + succinyl-CoA = O-succinyl-L-homoserine + CoA. Its pathway is amino-acid biosynthesis; L-methionine biosynthesis via de novo pathway; O-succinyl-L-homoserine from L-homoserine: step 1/1. Functionally, transfers a succinyl group from succinyl-CoA to L-homoserine, forming succinyl-L-homoserine. In Pseudomonas paraeruginosa (strain DSM 24068 / PA7) (Pseudomonas aeruginosa (strain PA7)), this protein is Homoserine O-succinyltransferase.